Reading from the N-terminus, the 153-residue chain is Large ribosomal subunit protein uL22 (153 aa).

Belongs to the universal ribosomal protein uL22 family. In terms of assembly, part of the 50S ribosomal subunit.

Functionally, this protein binds specifically to 23S rRNA. It makes multiple contacts with different domains of the 23S rRNA in the assembled 50S subunit and ribosome. In terms of biological role, the globular domain of the protein is located near the polypeptide exit tunnel on the outside of the subunit, while an extended beta-hairpin is found that lines the wall of the exit tunnel in the center of the 70S ribosome. In Methanococcus aeolicus (strain ATCC BAA-1280 / DSM 17508 / OCM 812 / Nankai-3), this protein is Large ribosomal subunit protein uL22.